The chain runs to 123 residues: Large ribosomal subunit protein uL24 (123 aa).

It belongs to the universal ribosomal protein uL24 family. As to quaternary structure, part of the 50S ribosomal subunit.

In terms of biological role, one of two assembly initiator proteins, it binds directly to the 5'-end of the 23S rRNA, where it nucleates assembly of the 50S subunit. One of the proteins that surrounds the polypeptide exit tunnel on the outside of the subunit. The protein is Large ribosomal subunit protein uL24 of Solibacter usitatus (strain Ellin6076).